A 298-amino-acid chain; its full sequence is Probable endonuclease 4 (298 aa).

The Zn(2+) site is built by His-69, His-111, Glu-146, Asp-180, His-183, His-215, Asp-228, His-230, and Glu-260.

Belongs to the AP endonuclease 2 family. Zn(2+) serves as cofactor.

It catalyses the reaction Endonucleolytic cleavage to 5'-phosphooligonucleotide end-products.. Endonuclease IV plays a role in DNA repair. It cleaves phosphodiester bonds at apurinic or apyrimidinic (AP) sites, generating a 3'-hydroxyl group and a 5'-terminal sugar phosphate. This Bacillus cereus (strain AH820) protein is Probable endonuclease 4.